A 348-amino-acid polypeptide reads, in one-letter code: Dihydroorotase (348 aa).

Positions 17 and 19 each coordinate Zn(2+). Substrate is bound by residues 19 to 21 and N45; that span reads HLR. K103, H140, and H178 together coordinate Zn(2+). An N6-carboxylysine modification is found at K103. H140 contacts substrate. L223 serves as a coordination point for substrate. D251 lines the Zn(2+) pocket. Residue D251 is part of the active site. 2 residues coordinate substrate: H255 and A267.

It belongs to the metallo-dependent hydrolases superfamily. DHOase family. Class II DHOase subfamily. In terms of assembly, homodimer. It depends on Zn(2+) as a cofactor.

The catalysed reaction is (S)-dihydroorotate + H2O = N-carbamoyl-L-aspartate + H(+). It functions in the pathway pyrimidine metabolism; UMP biosynthesis via de novo pathway; (S)-dihydroorotate from bicarbonate: step 3/3. Functionally, catalyzes the reversible cyclization of carbamoyl aspartate to dihydroorotate. This Salmonella typhi protein is Dihydroorotase.